Here is a 348-residue protein sequence, read N- to C-terminus: GMP reductase (348 aa).

108-131 lines the NADP(+) pocket; sequence ADFIKLRQILALSPSLKFICIDVA. Gly181 and Gly183 together coordinate K(+). Cys186 acts as the Thioimidate intermediate in catalysis. 216-239 provides a ligand contact to NADP(+); the sequence is IVSDGGCTMPGDVAKAFGGGADFV.

Belongs to the IMPDH/GMPR family. GuaC type 1 subfamily. Homotetramer.

It carries out the reaction IMP + NH4(+) + NADP(+) = GMP + NADPH + 2 H(+). Catalyzes the irreversible NADPH-dependent deamination of GMP to IMP. It functions in the conversion of nucleobase, nucleoside and nucleotide derivatives of G to A nucleotides, and in maintaining the intracellular balance of A and G nucleotides. In Edwardsiella ictaluri (strain 93-146), this protein is GMP reductase.